The primary structure comprises 211 residues: Histone H1t (211 aa).

N-acetylalanine is present on A1. Low complexity predominate over residues 1-16 (AETAPAAPADSVPASV). Residues 1–42 (AETAPAAPADSVPASVEKPPAKKRGKKPVGLTGTSRKAPSAS) form a disordered region. Positions 32-42 (TGTSRKAPSAS) are enriched in polar residues. Residues 39-112 (PSASVSKLIT…GASGSFKLSK (74 aa)) enclose the H15 domain. At R57 the chain carries Citrulline. A disordered region spans residues 101-211 (GTGASGSFKL…TNPRKATNRK (111 aa)). Positions 121–135 (GKVKKPAAAKTKKLV) are enriched in basic residues. Residue S142 is modified to Phosphoserine. Residues 147 to 156 (KANKRAKKSR) show a composition bias toward basic residues. Phosphothreonine is present on T158. Phosphoserine is present on residues S166 and S181. A compositionally biased stretch (basic residues) spans 176-189 (KQQRKSPAKARAAK).

This sequence belongs to the histone H1/H5 family. Post-translationally, phosphorylated in early spermatids. Citrullination at Arg-57 (H1R54ci) by PADI4 takes place within the DNA-binding site of H1 and results in its displacement from chromatin and global chromatin decondensation, thereby promoting pluripotency and stem cell maintenance. In terms of tissue distribution, testis-specific.

The protein resides in the nucleus. It localises to the chromosome. Its function is as follows. Testis-specific histone H1 that forms less compacted chromatin compared to other H1 histone subtypes. Formation of more relaxed chromatin may be required to promote chromatin architecture required for proper chromosome regulation during meiosis, such as homologous recombination. Histones H1 act as linkers that bind to nucleosomes and compact polynucleosomes into a higher-order chromatin configuration. The protein is Histone H1t of Sus scrofa (Pig).